The sequence spans 151 residues: Small ribosomal subunit protein uS15 (151 aa).

An N6-acetyllysine; alternate modification is found at Lys27. An N6-succinyllysine; alternate modification is found at Lys27. Lys27 is covalently cross-linked (Glycyl lysine isopeptide (Lys-Gly) (interchain with G-Cter in ubiquitin)). Ser30 carries the post-translational modification Phosphoserine. Lys34 bears the N6-succinyllysine mark. The residue at position 38 (Tyr38) is a Phosphotyrosine. A Glycyl lysine isopeptide (Lys-Gly) (interchain with G-Cter in SUMO2) cross-link involves residue Lys43.

Belongs to the universal ribosomal protein uS15 family. Component of the small ribosomal subunit. Part of the small subunit (SSU) processome, composed of more than 70 proteins and the RNA chaperone small nucleolar RNA (snoRNA) U3. Ubiquitinated at Lys-27 by RNF14 and RNF25 in response to ribosome collisions (ribosome stalling).

It localises to the cytoplasm. The protein resides in the nucleus. It is found in the nucleolus. In terms of biological role, component of the small ribosomal subunit. The ribosome is a large ribonucleoprotein complex responsible for the synthesis of proteins in the cell. Part of the small subunit (SSU) processome, first precursor of the small eukaryotic ribosomal subunit. During the assembly of the SSU processome in the nucleolus, many ribosome biogenesis factors, an RNA chaperone and ribosomal proteins associate with the nascent pre-rRNA and work in concert to generate RNA folding, modifications, rearrangements and cleavage as well as targeted degradation of pre-ribosomal RNA by the RNA exosome. The polypeptide is Small ribosomal subunit protein uS15 (Homo sapiens (Human)).